A 65-amino-acid chain; its full sequence is Large ribosomal subunit protein bL35 (65 aa).

Belongs to the bacterial ribosomal protein bL35 family.

The polypeptide is Large ribosomal subunit protein bL35 (Thiobacillus denitrificans (strain ATCC 25259 / T1)).